A 129-amino-acid chain; its full sequence is Putative membrane protein insertion efficiency factor (129 aa).

The protein belongs to the UPF0161 family.

Its subcellular location is the cell inner membrane. Its function is as follows. Could be involved in insertion of integral membrane proteins into the membrane. The sequence is that of Putative membrane protein insertion efficiency factor from Rhodopseudomonas palustris (strain ATCC BAA-98 / CGA009).